The primary structure comprises 299 residues: tRNA dimethylallyltransferase (299 aa).

An ATP-binding site is contributed by 13-20 (GPTASGKT). 15 to 20 (TASGKT) contacts substrate. The interaction with substrate tRNA stretch occupies residues 38 to 41 (DSRQ).

It belongs to the IPP transferase family. In terms of assembly, monomer. Mg(2+) serves as cofactor.

It carries out the reaction adenosine(37) in tRNA + dimethylallyl diphosphate = N(6)-dimethylallyladenosine(37) in tRNA + diphosphate. In terms of biological role, catalyzes the transfer of a dimethylallyl group onto the adenine at position 37 in tRNAs that read codons beginning with uridine, leading to the formation of N6-(dimethylallyl)adenosine (i(6)A). The protein is tRNA dimethylallyltransferase of Parasynechococcus marenigrum (strain WH8102).